The chain runs to 296 residues: GTP cyclohydrolase FolE2 (296 aa).

The protein belongs to the GTP cyclohydrolase IV family.

The enzyme catalyses GTP + H2O = 7,8-dihydroneopterin 3'-triphosphate + formate + H(+). The protein operates within cofactor biosynthesis; 7,8-dihydroneopterin triphosphate biosynthesis; 7,8-dihydroneopterin triphosphate from GTP: step 1/1. In terms of biological role, converts GTP to 7,8-dihydroneopterin triphosphate. The protein is GTP cyclohydrolase FolE2 of Delftia acidovorans (strain DSM 14801 / SPH-1).